Consider the following 434-residue polypeptide: F-box/LRR-repeat protein 21 (434 aa).

One can recognise an F-box domain in the interval 39-85 (LLDWGTLPHHVILQIFQYLPLIDRARASSVCRRWNEVFHIPDLWRKF). 6 LRR repeats span residues 187 to 213 (DTPVDDPSLKILVANNSDTLRLLKMSS), 214 to 239 (CPHVSSDGILCVADHCQGLRELALNY), 242 to 265 (LSDEILLALSSETHVNLEHLRIDV), 322 to 347 (GRSVSRAILGRIGLNCPRLIELVVCA), 349 to 374 (GLLPLDSELIRIAKHCKNLTSLGLSE), and 375 to 400 (CEVSCSAFVEFVRLCGRRLTQLSIME).

As to quaternary structure, part of the SCF (SKP1-CUL1-F-box) E3 ubiquitin-protein ligase complex SCF(FBXL21) composed of CUL1, SKP1, RBX1 and FBXL21. Interacts with CRY1 and CRY2. Expressed in the hypothalamus, especially in the suprachiasmatic nucleus (SCN). Expression is driven by the core-clock. There is a pronounced diurnal and circadian expression rhythms rising rapidly at the start of the day and declining at the onset of the night.

It is found in the cytoplasm. Its subcellular location is the cytosol. The protein localises to the nucleus. The protein operates within protein modification; protein ubiquitination. Functionally, substrate-recognition component of the SCF(FBXL21) E3 ubiquitin ligase complex involved in circadian rhythm function. Plays a key role in the maintenance of both the speed and the robustness of the circadian clock oscillation. The SCF(FBXL21) complex mainly acts in the cytosol and mediates ubiquitination of CRY proteins (CRY1 and CRY2), leading to CRY proteins stabilization. The SCF(FBXL21) complex counteracts the activity of the SCF(FBXL3) complex and protects CRY proteins from degradation. Involved in the hypothalamic suprachiasmatic nucleus (SCN) clock regulating temporal organization of the daily activities. In Mus musculus (Mouse), this protein is F-box/LRR-repeat protein 21 (Fbxl21).